A 453-amino-acid chain; its full sequence is Phenylalanine-4-hydroxylase (453 aa).

An N-acetylalanine modification is found at alanine 2. Serine 16 bears the Phosphoserine; by PKA mark. The region spanning 36-114 is the ACT domain; sequence SLIFSLKEEV…TVHELSRDKE (79 aa). Histidine 285, histidine 290, and glutamate 330 together coordinate Fe cation.

It belongs to the biopterin-dependent aromatic amino acid hydroxylase family. Homodimer and homotetramer. It depends on Fe(2+) as a cofactor. In terms of processing, phosphorylation at Ser-16 increases basal activity and facilitates activation by the substrate phenylalanine.

The catalysed reaction is (6R)-L-erythro-5,6,7,8-tetrahydrobiopterin + L-phenylalanine + O2 = (4aS,6R)-4a-hydroxy-L-erythro-5,6,7,8-tetrahydrobiopterin + L-tyrosine. It functions in the pathway amino-acid degradation; L-phenylalanine degradation; acetoacetate and fumarate from L-phenylalanine: step 1/6. N-terminal region of PAH is thought to contain allosteric binding sites for phenylalanine and to constitute an 'inhibitory' domain that regulates the activity of a catalytic domain in the C-terminal portion of the molecule. Its function is as follows. Catalyzes the hydroxylation of L-phenylalanine to L-tyrosine. This chain is Phenylalanine-4-hydroxylase (Pah), found in Rattus norvegicus (Rat).